The following is a 686-amino-acid chain: Homoaconitase, mitochondrial (686 aa).

The transit peptide at 1–17 directs the protein to the mitochondrion; sequence MRVVRCVRRFSASRAVS. [4Fe-4S] cluster contacts are provided by cysteine 337, cysteine 401, and cysteine 404.

The protein belongs to the aconitase/IPM isomerase family. The cofactor is [4Fe-4S] cluster.

The protein resides in the mitochondrion. The catalysed reaction is (2R,3S)-homoisocitrate = cis-homoaconitate + H2O. The protein operates within amino-acid biosynthesis; L-lysine biosynthesis via AAA pathway; L-alpha-aminoadipate from 2-oxoglutarate: step 3/5. Functionally, catalyzes the reversible hydration of cis-homoaconitate to (2R,3S)-homoisocitrate, a step in the alpha-aminoadipate pathway for lysine biosynthesis. This Eremothecium gossypii (strain ATCC 10895 / CBS 109.51 / FGSC 9923 / NRRL Y-1056) (Yeast) protein is Homoaconitase, mitochondrial (LYS4).